We begin with the raw amino-acid sequence, 585 residues long: Glutamate decarboxylase 2 (585 aa).

Residues 1-25 (MASPGSGFWSFGSEDGSGDPENPST) form a disordered region. A phosphoserine mark is found at Ser3, Ser6, Ser10, and Ser13. Residues Cys30 and Cys45 are each lipidated (S-palmitoyl cysteine). 181–183 (QLS) is a substrate binding site. Lys396 is subject to N6-(pyridoxal phosphate)lysine. Arg558 is a binding site for substrate.

It belongs to the group II decarboxylase family. In terms of assembly, homodimer. Pyridoxal 5'-phosphate serves as cofactor. In terms of processing, phosphorylated; which does not affect kinetic parameters or subcellular location. Post-translationally, palmitoylated; which is required for presynaptic clustering.

Its subcellular location is the cytoplasm. The protein resides in the cytosol. The protein localises to the cytoplasmic vesicle. It is found in the presynaptic cell membrane. It localises to the golgi apparatus membrane. The catalysed reaction is L-glutamate + H(+) = 4-aminobutanoate + CO2. Functionally, catalyzes the production of GABA. This chain is Glutamate decarboxylase 2 (GAD2), found in Canis lupus familiaris (Dog).